The sequence spans 235 residues: Large ribosomal subunit protein uL1 (235 aa).

Belongs to the universal ribosomal protein uL1 family. Part of the 50S ribosomal subunit.

Binds directly to 23S rRNA. The L1 stalk is quite mobile in the ribosome, and is involved in E site tRNA release. Its function is as follows. Protein L1 is also a translational repressor protein, it controls the translation of the L11 operon by binding to its mRNA. This chain is Large ribosomal subunit protein uL1, found in Synechococcus sp. (strain CC9902).